The following is a 35-amino-acid chain: Dermonecrotic toxin LdSicTox-alpha-1 (35 aa).

Histidine 11 is an active-site residue. The Mg(2+) site is built by glutamate 31 and aspartate 33.

It belongs to the arthropod phospholipase D family. Class I subfamily. Mg(2+) is required as a cofactor. Post-translationally, contains 1 disulfide bond. In terms of tissue distribution, expressed by the venom gland.

The protein localises to the secreted. The catalysed reaction is an N-(acyl)-sphingosylphosphocholine = an N-(acyl)-sphingosyl-1,3-cyclic phosphate + choline. It catalyses the reaction an N-(acyl)-sphingosylphosphoethanolamine = an N-(acyl)-sphingosyl-1,3-cyclic phosphate + ethanolamine. It carries out the reaction a 1-acyl-sn-glycero-3-phosphocholine = a 1-acyl-sn-glycero-2,3-cyclic phosphate + choline. The enzyme catalyses a 1-acyl-sn-glycero-3-phosphoethanolamine = a 1-acyl-sn-glycero-2,3-cyclic phosphate + ethanolamine. Its function is as follows. Dermonecrotic toxins cleave the phosphodiester linkage between the phosphate and headgroup of certain phospholipids (sphingolipid and lysolipid substrates), forming an alcohol (often choline) and a cyclic phosphate. This toxin acts on sphingomyelin (SM). It may also act on ceramide phosphoethanolamine (CPE), lysophosphatidylcholine (LPC) and lysophosphatidylethanolamine (LPE), but not on lysophosphatidylserine (LPS), and lysophosphatidylglycerol (LPG). It acts by transphosphatidylation, releasing exclusively cyclic phosphate products as second products. Induces dermonecrosis, hemolysis, increased vascular permeability, edema, inflammatory response, and platelet aggregation. This chain is Dermonecrotic toxin LdSicTox-alpha-1, found in Loxosceles deserta (Desert recluse spider).